Consider the following 180-residue polypeptide: Small ribosomal subunit protein uS4 (180 aa).

One can recognise an S4 RNA-binding domain in the interval arginine 103 to valine 174.

This sequence belongs to the universal ribosomal protein uS4 family. In terms of assembly, part of the 30S ribosomal subunit. Contacts protein S5. The interaction surface between S4 and S5 is involved in control of translational fidelity.

Functionally, one of the primary rRNA binding proteins, it binds directly to 16S rRNA where it nucleates assembly of the body of the 30S subunit. In terms of biological role, with S5 and S12 plays an important role in translational accuracy. This Thermococcus sibiricus (strain DSM 12597 / MM 739) protein is Small ribosomal subunit protein uS4.